Reading from the N-terminus, the 560-residue chain is Zorya protein ZorC (560 aa).

Functionally, component of antiviral defense system Zorya type I, composed of ZorA, ZorB, ZorC and ZorD. Expression of Zorya type I in E.coli (strain MG1655) confers 10,000-fold resistance to phage SECphi27, 100-fold resistance to lambda, and 10-fold resistance to T7. While most T7 infected Zorya-containing cells undergo abortive infection, a minority produce viable phage progeny. These eventually accumulate to a high multiplicity of infection, leading to culture collapse by 2 hours after initial infection. ZorA and ZorB probably assemble in the cell inner membrane and exert their effect there. In Escherichia coli O139:H28 (strain E24377A / ETEC), this protein is Zorya protein ZorC.